The chain runs to 327 residues: Glycerol-3-phosphate dehydrogenase [NAD(P)+] (327 aa).

NADPH contacts are provided by Trp-11, His-30, and Lys-103. Sn-glycerol 3-phosphate is bound by residues Lys-103, Gly-131, and Ser-133. NADPH is bound at residue Ala-135. 5 residues coordinate sn-glycerol 3-phosphate: Lys-186, Asp-243, Ser-253, Arg-254, and Asn-255. Lys-186 functions as the Proton acceptor in the catalytic mechanism. Arg-254 contributes to the NADPH binding site. NADPH is bound by residues Val-281 and Glu-283.

It belongs to the NAD-dependent glycerol-3-phosphate dehydrogenase family.

Its subcellular location is the cytoplasm. It carries out the reaction sn-glycerol 3-phosphate + NAD(+) = dihydroxyacetone phosphate + NADH + H(+). The catalysed reaction is sn-glycerol 3-phosphate + NADP(+) = dihydroxyacetone phosphate + NADPH + H(+). The protein operates within membrane lipid metabolism; glycerophospholipid metabolism. Functionally, catalyzes the reduction of the glycolytic intermediate dihydroxyacetone phosphate (DHAP) to sn-glycerol 3-phosphate (G3P), the key precursor for phospholipid synthesis. The chain is Glycerol-3-phosphate dehydrogenase [NAD(P)+] from Wolbachia pipientis wMel.